The following is a 156-amino-acid chain: Small ribosomal subunit protein uS7 (156 aa).

This sequence belongs to the universal ribosomal protein uS7 family. Part of the 30S ribosomal subunit. Contacts proteins S9 and S11.

In terms of biological role, one of the primary rRNA binding proteins, it binds directly to 16S rRNA where it nucleates assembly of the head domain of the 30S subunit. Is located at the subunit interface close to the decoding center, probably blocks exit of the E-site tRNA. This chain is Small ribosomal subunit protein uS7, found in Clostridioides difficile (strain 630) (Peptoclostridium difficile).